Here is a 404-residue protein sequence, read N- to C-terminus: Tryptophan synthase beta chain (404 aa).

Lysine 94 carries the post-translational modification N6-(pyridoxal phosphate)lysine.

Belongs to the TrpB family. As to quaternary structure, tetramer of two alpha and two beta chains. It depends on pyridoxal 5'-phosphate as a cofactor.

It catalyses the reaction (1S,2R)-1-C-(indol-3-yl)glycerol 3-phosphate + L-serine = D-glyceraldehyde 3-phosphate + L-tryptophan + H2O. It participates in amino-acid biosynthesis; L-tryptophan biosynthesis; L-tryptophan from chorismate: step 5/5. Its function is as follows. The beta subunit is responsible for the synthesis of L-tryptophan from indole and L-serine. This chain is Tryptophan synthase beta chain, found in Staphylococcus aureus (strain MRSA252).